Here is a 73-residue protein sequence, read N- to C-terminus: Large ribosomal subunit protein bL31 (73 aa).

The Zn(2+) site is built by Cys16, Cys18, Cys38, and Cys41.

This sequence belongs to the bacterial ribosomal protein bL31 family. Type A subfamily. Part of the 50S ribosomal subunit. Zn(2+) is required as a cofactor.

Binds the 23S rRNA. In Vibrio vulnificus (strain CMCP6), this protein is Large ribosomal subunit protein bL31.